A 209-amino-acid chain; its full sequence is Probable E3 ubiquitin-protein ligase NleG7 (209 aa).

The protein belongs to the NleG E3 ligase family. In terms of processing, two sizes of protein are detected in situ; only the smaller protein is secreted.

The protein localises to the secreted. It localises to the host cytoplasm. It catalyses the reaction S-ubiquitinyl-[E2 ubiquitin-conjugating enzyme]-L-cysteine + [acceptor protein]-L-lysine = [E2 ubiquitin-conjugating enzyme]-L-cysteine + N(6)-ubiquitinyl-[acceptor protein]-L-lysine.. Its function is as follows. Effector proteins function to alter host cell physiology and promote bacterial survival in host tissues. This protein is probably an E3 ubiquitin-protein ligase that interferes with the host's ubiquitination pathway and targets host proteins for proteasomal degradation. Mice infected with a strain of bacteria deleted for this gene were colonized less quickly by bacteria. The sequence is that of Probable E3 ubiquitin-protein ligase NleG7 from Citrobacter rodentium.